The chain runs to 96 residues: Co-chaperonin GroES (96 aa).

The protein belongs to the GroES chaperonin family. As to quaternary structure, heptamer of 7 subunits arranged in a ring. Interacts with the chaperonin GroEL.

The protein localises to the cytoplasm. Functionally, together with the chaperonin GroEL, plays an essential role in assisting protein folding. The GroEL-GroES system forms a nano-cage that allows encapsulation of the non-native substrate proteins and provides a physical environment optimized to promote and accelerate protein folding. GroES binds to the apical surface of the GroEL ring, thereby capping the opening of the GroEL channel. In Teredinibacter turnerae (strain ATCC 39867 / T7901), this protein is Co-chaperonin GroES.